Consider the following 212-residue polypeptide: Probable octanoyltransferase (212 aa).

The region spanning 28 to 199 (GVSEEMILVT…NLETLLQRQE (172 aa)) is the BPL/LPL catalytic domain. Residues 66–73 (RGGDATYH), 130–132 (SVG), and 143–145 (GVA) each bind substrate. Cys-161 acts as the Acyl-thioester intermediate in catalysis.

The protein belongs to the LipB family.

Its subcellular location is the cytoplasm. It catalyses the reaction octanoyl-[ACP] + L-lysyl-[protein] = N(6)-octanoyl-L-lysyl-[protein] + holo-[ACP] + H(+). It functions in the pathway protein modification; protein lipoylation via endogenous pathway; protein N(6)-(lipoyl)lysine from octanoyl-[acyl-carrier-protein]: step 1/2. In terms of biological role, catalyzes the transfer of endogenously produced octanoic acid from octanoyl-acyl-carrier-protein onto the lipoyl domains of lipoate-dependent enzymes. Lipoyl-ACP can also act as a substrate although octanoyl-ACP is likely to be the physiological substrate. This is Probable octanoyltransferase from Pyrobaculum arsenaticum (strain DSM 13514 / JCM 11321 / PZ6).